The chain runs to 510 residues: Probable cytosol aminopeptidase (510 aa).

Residues Lys272 and Asp277 each contribute to the Mn(2+) site. Lys284 is an active-site residue. 3 residues coordinate Mn(2+): Asp296, Asp355, and Glu357. Arg359 is an active-site residue.

It belongs to the peptidase M17 family. Mn(2+) is required as a cofactor.

It is found in the cytoplasm. The catalysed reaction is Release of an N-terminal amino acid, Xaa-|-Yaa-, in which Xaa is preferably Leu, but may be other amino acids including Pro although not Arg or Lys, and Yaa may be Pro. Amino acid amides and methyl esters are also readily hydrolyzed, but rates on arylamides are exceedingly low.. It carries out the reaction Release of an N-terminal amino acid, preferentially leucine, but not glutamic or aspartic acids.. Presumably involved in the processing and regular turnover of intracellular proteins. Catalyzes the removal of unsubstituted N-terminal amino acids from various peptides. This Synechococcus sp. (strain JA-2-3B'a(2-13)) (Cyanobacteria bacterium Yellowstone B-Prime) protein is Probable cytosol aminopeptidase.